A 144-amino-acid polypeptide reads, in one-letter code: Large ribosomal subunit protein uL15 (144 aa).

Residues 1-53 (MRLNTLSPAQGAKQAPKRVGRGIGSGLGKTGGRGHKGQNSRTGGGVRRGFEGG) form a disordered region. Gly residues predominate over residues 21–31 (RGIGSGLGKTG).

Belongs to the universal ribosomal protein uL15 family. Part of the 50S ribosomal subunit.

Its function is as follows. Binds to the 23S rRNA. This chain is Large ribosomal subunit protein uL15, found in Hamiltonella defensa subsp. Acyrthosiphon pisum (strain 5AT).